We begin with the raw amino-acid sequence, 1271 residues long: Zinc finger transcription factor Trps1 (1271 aa).

Disordered regions lie at residues 1–76 (MVRK…DSAS) and 124–155 (SPIK…DMSP). Polar residues predominate over residues 34 to 49 (SKEISTDPMQENSEQS). A compositionally biased stretch (basic and acidic residues) spans 54–65 (HNSDDHSFHDQE). Residues 66–76 (PSSSINKDSAS) are compositionally biased toward polar residues. The C2H2-type 1; atypical zinc-finger motif lies at 217–242 (FKCNICGYGYYGNDPTDLIKHFRKYH). A C2H2-type 2; atypical zinc finger spans residues 328-353 (FRCKFCNFTYLAKSATELEQHFLKTH). The disordered stretch occupies residues 353–387 (HPNKMKMSSDSGKPSEKSTNKSSPIPRSCEPGDLG). The C2H2-type 3; atypical zinc finger occupies 426–451 (YWCKFCSFSCESSSNSKLLEHHSKQH). The C2H2-type 4; atypical zinc finger occupies 513–543 (YNCQFCDFRYSKSHGPEVILVGPLLRHYQQH). 3 consecutive C2H2-type zinc fingers follow at residues 604–627 (HQCD…ENAH), 656–679 (HSCT…RRVH), and 682–705 (YKCR…NSAH). Residues 843 to 877 (GVTAGASGEKSGQHTPQYPTAGDSKSKDESQSLLR) are disordered. Residues 886–910 (CANCLTTKTSLWRKNANGGYVCNAC) form a GATA-type zinc finger. 3 disordered regions span residues 938–987 (RTRK…RENQ), 1031–1064 (SPQE…YMRP), and 1154–1196 (LDLA…EKSD). The segment covering 972–985 (IRSEDHSMEGHQRE) has biased composition (basic and acidic residues). The span at 1031 to 1049 (SPQESSGEPGNSSSVSDGK) shows a compositional bias: low complexity. 2 stretches are compositionally biased toward basic and acidic residues: residues 1050–1062 (GSSE…EKYM) and 1170–1196 (DSKE…EKSD). A transcriptional repressor domain region spans residues 1153–1271 (PLDLAMKHSR…QAEKNGKNKD (119 aa)). Glycyl lysine isopeptide (Lys-Gly) (interchain with G-Cter in SUMO) cross-links involve residues K1182 and K1191. 2 consecutive C2H2-type zinc fingers follow at residues 1205–1227 (TKCV…MSCH) and 1233–1257 (FQCS…RGLH).

In terms of assembly, binds specifically to GATA sequences. In terms of processing, sumoylated. Sumoylation in the repressor domain inhibits the transcription repression activity. Sumoylation on Lys-1191 is the major site. Appears to be sumoylated on multiple sites.

Its subcellular location is the nucleus. Its function is as follows. Transcriptional repressor. Represses expression of GATA-regulated genes at selected sites and stages in vertebrate development. This is Zinc finger transcription factor Trps1 (trps1) from Xenopus laevis (African clawed frog).